A 248-amino-acid polypeptide reads, in one-letter code: Methionine aminopeptidase (248 aa).

Position 77 (His77) interacts with substrate. A divalent metal cation contacts are provided by Asp94, Asp105, and His169. His176 provides a ligand contact to substrate. A divalent metal cation-binding residues include Glu202 and Glu233.

The protein belongs to the peptidase M24A family. Methionine aminopeptidase type 1 subfamily. Monomer. The cofactor is Co(2+). Zn(2+) serves as cofactor. Requires Mn(2+) as cofactor. Fe(2+) is required as a cofactor.

The enzyme catalyses Release of N-terminal amino acids, preferentially methionine, from peptides and arylamides.. Its function is as follows. Removes the N-terminal methionine from nascent proteins. The N-terminal methionine is often cleaved when the second residue in the primary sequence is small and uncharged (Met-Ala-, Cys, Gly, Pro, Ser, Thr, or Val). Requires deformylation of the N(alpha)-formylated initiator methionine before it can be hydrolyzed. The polypeptide is Methionine aminopeptidase (Mycoplasma genitalium (strain ATCC 33530 / DSM 19775 / NCTC 10195 / G37) (Mycoplasmoides genitalium)).